An 874-amino-acid polypeptide reads, in one-letter code: Alanine--tRNA ligase (874 aa).

Positions 563, 567, 665, and 669 each coordinate Zn(2+).

It belongs to the class-II aminoacyl-tRNA synthetase family. Requires Zn(2+) as cofactor.

It is found in the cytoplasm. It catalyses the reaction tRNA(Ala) + L-alanine + ATP = L-alanyl-tRNA(Ala) + AMP + diphosphate. Catalyzes the attachment of alanine to tRNA(Ala) in a two-step reaction: alanine is first activated by ATP to form Ala-AMP and then transferred to the acceptor end of tRNA(Ala). Also edits incorrectly charged Ser-tRNA(Ala) and Gly-tRNA(Ala) via its editing domain. The chain is Alanine--tRNA ligase from Haemophilus influenzae (strain 86-028NP).